Here is a 380-residue protein sequence, read N- to C-terminus: Flap endonuclease 1 (380 aa).

An N-domain region spans residues 1–104 (MGIQGLAKLI…GELAKRSERR (104 aa)). A Symmetric dimethylarginine; by PRMT5 modification is found at R19. D34 contributes to the Mg(2+) binding site. DNA is bound by residues R47 and R70. Position 80 is an N6-acetyllysine (K80). A Mg(2+)-binding site is contributed by D86. A symmetric dimethylarginine; by PRMT5 mark is found at R100 and R104. The interval 122–253 (EVEKFTKRLV…KRAVDLIQKH (132 aa)) is I-domain. Residues E158, E160, D179, and D181 each contribute to the Mg(2+) site. Position 158 (E158) interacts with DNA. S187 is modified (phosphoserine; by CDK2). Residue R192 is modified to Symmetric dimethylarginine; by PRMT5. Residue S197 is modified to Phosphoserine. G231 and D233 together coordinate DNA. Position 233 (D233) interacts with Mg(2+). Phosphoserine occurs at positions 255, 293, and 335. The segment at 327 to 380 (RLSKSRQGSTQGRLDDFFKVTGSLSSAKRKEPEPKGSTKKKAKTGAAGKFKRGK) is disordered. A Phosphothreonine modification is found at T336. Residues 336 to 344 (TQGRLDDFF) form an interaction with PCNA region. An N6-acetyllysine modification is found at K354. Positions 363-380 (STKKKAKTGAAGKFKRGK) are enriched in basic residues. T364 is modified (phosphothreonine). 3 positions are modified to N6-acetyllysine: K375, K377, and K380.

This sequence belongs to the XPG/RAD2 endonuclease family. FEN1 subfamily. In terms of assembly, interacts with PCNA. Three molecules of FEN1 bind to one PCNA trimer with each molecule binding to one PCNA monomer. PCNA stimulates the nuclease activity without altering cleavage specificity. The C-terminal domain binds EP300; can bind simultaneously to both PCNA and EP300. Interacts with DDX11; this interaction is direct and increases flap endonuclease activity of FEN1. Interacts with WDR4; regulating its endonuclease activity. Interacts with POLB. Requires Mg(2+) as cofactor. Post-translationally, acetylated by EP300. Acetylation inhibits both endonuclease and exonuclease activity. Acetylation also reduces DNA-binding activity but does not affect interaction with PCNA or EP300. Phosphorylation upon DNA damage induces relocalization to the nuclear plasma. Phosphorylation at Ser-187 by CDK2 occurs during late S-phase and results in dissociation from PCNA. In terms of processing, methylation at Arg-192 by PRMT5 impedes Ser-187 phosphorylation and increases interaction with PCNA.

The protein localises to the nucleus. It localises to the nucleolus. It is found in the nucleoplasm. Its subcellular location is the mitochondrion. Structure-specific nuclease with 5'-flap endonuclease and 5'-3' exonuclease activities involved in DNA replication and repair. During DNA replication, cleaves the 5'-overhanging flap structure that is generated by displacement synthesis when DNA polymerase encounters the 5'-end of a downstream Okazaki fragment. It enters the flap from the 5'-end and then tracks to cleave the flap base, leaving a nick for ligation. Also involved in the long patch base excision repair (LP-BER) pathway, by cleaving within the apurinic/apyrimidinic (AP) site-terminated flap. Acts as a genome stabilization factor that prevents flaps from equilibrating into structures that lead to duplications and deletions. Also possesses 5'-3' exonuclease activity on nicked or gapped double-stranded DNA, and exhibits RNase H activity. Also involved in replication and repair of rDNA and in repairing mitochondrial DNA. The polypeptide is Flap endonuclease 1 (Macaca fascicularis (Crab-eating macaque)).